Here is an 88-residue protein sequence, read N- to C-terminus: Protein LE25 (88 aa).

The interval methionine 1 to phenylalanine 88 is disordered. Residues glycine 14–glutamate 65 are compositionally biased toward basic and acidic residues.

It belongs to the LEA type 1 family. Accumulates in developing seeds and drought-stressed leaves.

This Solanum lycopersicum (Tomato) protein is Protein LE25 (LE25).